The sequence spans 721 residues: Fatty acid oxidation complex subunit alpha (721 aa).

An enoyl-CoA hydratase/isomerase region spans residues 1-190 (MIYEGKAITV…KVGVVDAIVA (190 aa)). Residue D297 participates in substrate binding. The 3-hydroxyacyl-CoA dehydrogenase stretch occupies residues 312–721 (RDVKQAAVLG…SFFGQASSEV (410 aa)). Residues M325, D344, 401–403 (VVE), K408, and S430 each bind NAD(+). H451 serves as the catalytic For 3-hydroxyacyl-CoA dehydrogenase activity. N454 contacts NAD(+). Positions 501 and 660 each coordinate substrate.

It in the N-terminal section; belongs to the enoyl-CoA hydratase/isomerase family. In the C-terminal section; belongs to the 3-hydroxyacyl-CoA dehydrogenase family. Heterotetramer of two alpha chains (FadB) and two beta chains (FadA).

It carries out the reaction a (3S)-3-hydroxyacyl-CoA + NAD(+) = a 3-oxoacyl-CoA + NADH + H(+). The catalysed reaction is a (3S)-3-hydroxyacyl-CoA = a (2E)-enoyl-CoA + H2O. It catalyses the reaction a 4-saturated-(3S)-3-hydroxyacyl-CoA = a (3E)-enoyl-CoA + H2O. The enzyme catalyses (3S)-3-hydroxybutanoyl-CoA = (3R)-3-hydroxybutanoyl-CoA. It carries out the reaction a (3Z)-enoyl-CoA = a 4-saturated (2E)-enoyl-CoA. The catalysed reaction is a (3E)-enoyl-CoA = a 4-saturated (2E)-enoyl-CoA. Its pathway is lipid metabolism; fatty acid beta-oxidation. Involved in the aerobic and anaerobic degradation of long-chain fatty acids via beta-oxidation cycle. Catalyzes the formation of 3-oxoacyl-CoA from enoyl-CoA via L-3-hydroxyacyl-CoA. It can also use D-3-hydroxyacyl-CoA and cis-3-enoyl-CoA as substrate. In Pseudomonas syringae pv. tomato (strain ATCC BAA-871 / DC3000), this protein is Fatty acid oxidation complex subunit alpha.